Here is a 214-residue protein sequence, read N- to C-terminus: Pyridoxine/pyridoxamine 5'-phosphate oxidase (214 aa).

Residues 8 to 11 (RTNY) and K66 contribute to the substrate site. Residues 61-66 (RIVLIK), 76-77 (FT), R82, K83, and Q105 contribute to the FMN site. Positions 123, 127, and 131 each coordinate substrate. FMN is bound by residues 140–141 (QS) and W184. Residue 190-192 (RLH) coordinates substrate. R194 contacts FMN.

This sequence belongs to the pyridoxamine 5'-phosphate oxidase family. As to quaternary structure, homodimer. It depends on FMN as a cofactor.

It carries out the reaction pyridoxamine 5'-phosphate + O2 + H2O = pyridoxal 5'-phosphate + H2O2 + NH4(+). It catalyses the reaction pyridoxine 5'-phosphate + O2 = pyridoxal 5'-phosphate + H2O2. The protein operates within cofactor metabolism; pyridoxal 5'-phosphate salvage; pyridoxal 5'-phosphate from pyridoxamine 5'-phosphate: step 1/1. It participates in cofactor metabolism; pyridoxal 5'-phosphate salvage; pyridoxal 5'-phosphate from pyridoxine 5'-phosphate: step 1/1. Functionally, catalyzes the oxidation of either pyridoxine 5'-phosphate (PNP) or pyridoxamine 5'-phosphate (PMP) into pyridoxal 5'-phosphate (PLP). The protein is Pyridoxine/pyridoxamine 5'-phosphate oxidase of Burkholderia thailandensis (strain ATCC 700388 / DSM 13276 / CCUG 48851 / CIP 106301 / E264).